The primary structure comprises 201 residues: Peptide deformylase (201 aa).

A disordered region spans residues 1-34 (MSLNFAAMARQSERQASTVMVPKGEEQPESPKIH). The span at 23 to 32 (KGEEQPESPK) shows a compositional bias: basic and acidic residues. Fe cation is bound by residues cysteine 121 and histidine 163. The active site involves glutamate 164. Histidine 167 provides a ligand contact to Fe cation.

It belongs to the polypeptide deformylase family. Fe(2+) serves as cofactor.

The enzyme catalyses N-terminal N-formyl-L-methionyl-[peptide] + H2O = N-terminal L-methionyl-[peptide] + formate. In terms of biological role, removes the formyl group from the N-terminal Met of newly synthesized proteins. Requires at least a dipeptide for an efficient rate of reaction. N-terminal L-methionine is a prerequisite for activity but the enzyme has broad specificity at other positions. This is Peptide deformylase from Synechococcus sp. (strain RCC307).